The sequence spans 262 residues: Ribosomal RNA small subunit methyltransferase A (262 aa).

Positions 13, 15, 40, 61, 85, and 104 each coordinate S-adenosyl-L-methionine.

This sequence belongs to the class I-like SAM-binding methyltransferase superfamily. rRNA adenine N(6)-methyltransferase family. RsmA subfamily.

The protein resides in the cytoplasm. The enzyme catalyses adenosine(1518)/adenosine(1519) in 16S rRNA + 4 S-adenosyl-L-methionine = N(6)-dimethyladenosine(1518)/N(6)-dimethyladenosine(1519) in 16S rRNA + 4 S-adenosyl-L-homocysteine + 4 H(+). In terms of biological role, specifically dimethylates two adjacent adenosines (A1518 and A1519) in the loop of a conserved hairpin near the 3'-end of 16S rRNA in the 30S particle. May play a critical role in biogenesis of 30S subunits. This Chromobacterium violaceum (strain ATCC 12472 / DSM 30191 / JCM 1249 / CCUG 213 / NBRC 12614 / NCIMB 9131 / NCTC 9757 / MK) protein is Ribosomal RNA small subunit methyltransferase A.